Reading from the N-terminus, the 207-residue chain is Ribosomal RNA small subunit methyltransferase G (207 aa).

S-adenosyl-L-methionine contacts are provided by residues Gly-73, Leu-78, 124–125 (VE), and Arg-139.

Belongs to the methyltransferase superfamily. RNA methyltransferase RsmG family.

The protein localises to the cytoplasm. It catalyses the reaction guanosine(527) in 16S rRNA + S-adenosyl-L-methionine = N(7)-methylguanosine(527) in 16S rRNA + S-adenosyl-L-homocysteine. Its function is as follows. Specifically methylates the N7 position of guanine in position 527 of 16S rRNA. The polypeptide is Ribosomal RNA small subunit methyltransferase G (Cronobacter sakazakii (strain ATCC BAA-894) (Enterobacter sakazakii)).